A 169-amino-acid polypeptide reads, in one-letter code: Podoplanin (169 aa).

The N-terminal stretch at 1-22 (MWRVPVLLLVLGGAGLRVPAAG) is a signal peptide. Residues 23-138 (ASTVRPDDII…EKDGLATVTL (116 aa)) are Extracellular-facing. A glycan (O-linked (GalNAc...) threonine) is linked at Thr-25. Positions 37–69 (DSVVTPGTEDSVVTPGAEDNVVTDGATEEPYES) are disordered. Ser-38 carries O-linked (GalNAc...) serine glycosylation. O-linked (GalNAc...) threonine glycans are attached at residues Thr-41 and Thr-44. Ser-47 carries an O-linked (GalNAc...) serine glycan. O-linked (GalNAc...) threonine glycans are attached at residues Thr-50, Thr-59, Thr-63, Thr-72, Thr-76, Thr-79, Thr-83, Thr-92, Thr-96, Thr-106, Thr-107, Thr-108, Thr-113, Thr-126, and Thr-127. Residues 139-159 (VGIIVGVLLAIGFIGGIIIVV) form a helical membrane-spanning segment. Residues 140–144 (GIIVG) are requires for dimerization and lipid rafts association. Residues 160–169 (ARKMSGRYSP) lie on the Cytoplasmic side of the membrane. Residues 161 to 162 (RK) form a requires for interaction with MSN and EZR region.

Belongs to the podoplanin family. Homodimer. Interacts with CLEC1B; the interaction is independent of CLEC1B glycosylation and activates CLEC1B; the interaction is dependent of sialic acid on O-glycans. Interacts with CD9; this interaction is homophilic and attenuates platelet aggregation and pulmonary metastasis induced by PDPN. Interacts with LGALS8; the interaction is glycosylation-dependent; may participate in connection of the lymphatic endothelium to the surrounding extracellular matrix. Interacts with HSPA9. Interacts (via extracellular domain) with CD44; this interaction is required for PDPN-mediated directional migration and regulation of lamellipodia extension/stabilization during cell spreading and migration. Interacts (via cytoplasmic domain) with MSN and EZR; activates RHOA and promotes epithelial-mesenchymal transition. Interacts with CCL21; relocalized PDPN to the basolateral membrane. In terms of processing, extensively O-glycosylated. Contains sialic acid residues. O-glycosylation is necessary for platelet aggregation activity. Disialylated at Thr-59; sialic acid is critical for platelet-aggregating activity and for CLEC1B interaction. The N-terminus is blocked.

It localises to the membrane. The protein resides in the cell projection. It is found in the filopodium membrane. The protein localises to the lamellipodium membrane. Its subcellular location is the microvillus membrane. It localises to the ruffle membrane. The protein resides in the membrane raft. It is found in the apical cell membrane. The protein localises to the basolateral cell membrane. Its subcellular location is the invadopodium. In terms of biological role, mediates effects on cell migration and adhesion through its different partners. During development plays a role in blood and lymphatic vessels separation by binding CLEC1B, triggering CLEC1B activation in platelets and leading to platelet activation and/or aggregation. Interaction with CD9, on the contrary, attenuates platelet aggregation and pulmonary metastasis induced by PDPN. Mediates effects on cell migration and adhesion through its different partners. Through MSN or EZR interaction promotes epithelial-mesenchymal transition (EMT) leading to ERZ phosphorylation and triggering RHOA activation leading to cell migration increase and invasiveness. Interaction with CD44 promotes directional cell migration in epithelial and tumor cells. In lymph nodes (LNs), controls fibroblastic reticular cells (FRCs) adhesion to the extracellular matrix (ECM) and contraction of the actomyosin by maintaining ERM proteins (EZR; MSN and RDX) and MYL9 activation through association with unknown transmembrane proteins. Engagement of CLEC1B by PDPN promotes FRCs relaxation by blocking lateral membrane interactions leading to reduction of ERM proteins (EZR; MSN and RDX) and MYL9 activation. Through binding with LGALS8 may participate in connection of the lymphatic endothelium to the surrounding extracellular matrix. In keratinocytes, induces changes in cell morphology showing an elongated shape, numerous membrane protrusions, major reorganization of the actin cytoskeleton, increased motility and decreased cell adhesion. Controls invadopodia stability and maturation leading to efficient degradation of the extracellular matrix (ECM) in tumor cells through modulation of RHOC activity in order to activate ROCK1/ROCK2 and LIMK1/LIMK2 and inactivation of CFL1. Required for normal lung cell proliferation and alveolus formation at birth. Does not function as a water channel or as a regulator of aquaporin-type water channels. Does not have any effect on folic acid or amino acid transport. This is Podoplanin (PDPN) from Canis lupus familiaris (Dog).